The chain runs to 861 residues: Leucine--tRNA ligase (861 aa).

Residues 42 to 52 (PYPSGKLHMGH) carry the 'HIGH' region motif. The short motif at 618-622 (KMSKS) is the 'KMSKS' region element. Lys-621 serves as a coordination point for ATP.

It belongs to the class-I aminoacyl-tRNA synthetase family.

It localises to the cytoplasm. The catalysed reaction is tRNA(Leu) + L-leucine + ATP = L-leucyl-tRNA(Leu) + AMP + diphosphate. In Buchnera aphidicola subsp. Baizongia pistaciae (strain Bp), this protein is Leucine--tRNA ligase.